The following is a 177-amino-acid chain: Large ribosomal subunit protein bL31m (177 aa).

Residues M1–G14 constitute a mitochondrion transit peptide. The sufficient for general mitochondrial translation stretch occupies residues K36–S118. The sufficient for dosage suppression of COX2 mutation stretch occupies residues L87–K177. The span at V111–V123 shows a compositional bias: polar residues. Residues V111–S144 form a disordered region. Residues E127 to S144 show a composition bias toward basic and acidic residues.

It belongs to the bacterial ribosomal protein bL31 family. Highly divergent. In terms of assembly, component of the mitochondrial large ribosomal subunit (mt-LSU). Mature yeast 74S mitochondrial ribosomes consist of a small (37S) and a large (54S) subunit. The 37S small subunit contains a 15S ribosomal RNA (15S mt-rRNA) and 34 different proteins. The 54S large subunit contains a 21S rRNA (21S mt-rRNA) and 46 different proteins.

Its subcellular location is the mitochondrion. Component of the mitochondrial ribosome (mitoribosome), a dedicated translation machinery responsible for the synthesis of mitochondrial genome-encoded proteins, including at least some of the essential transmembrane subunits of the mitochondrial respiratory chain. The mitoribosomes are attached to the mitochondrial inner membrane and translation products are cotranslationally integrated into the membrane. Overexpression of bL31m suppresses mutations in the COX2 leader peptide-encoding and initiation codon regions. The sequence is that of Large ribosomal subunit protein bL31m (MRPL36) from Saccharomyces cerevisiae (strain ATCC 204508 / S288c) (Baker's yeast).